We begin with the raw amino-acid sequence, 259 residues long: Putative protein-disulfide oxidoreductase RBE_1288 (259 aa).

The N-terminal stretch at 1-20 is a signal peptide; the sequence is MRNSFITLIFLLLLSGCSEE. Residues 25–54 are disordered; sequence VEQESSESITPAQASTSDENNNQTTETTTP. Positions 33-42 are enriched in polar residues; sequence ITPAQASTSD. Low complexity predominate over residues 43–54; it reads ENNNQTTETTTP. The Thioredoxin domain maps to 47 to 251; sequence QTTETTTPAV…ISAAIDKAIE (205 aa). Cys-104 and Cys-107 are joined by a disulfide.

It belongs to the thioredoxin family. DsbA subfamily.

The protein resides in the periplasm. Its function is as follows. May be required for disulfide bond formation in some proteins. The polypeptide is Putative protein-disulfide oxidoreductase RBE_1288 (Rickettsia bellii (strain RML369-C)).